The chain runs to 549 residues: Oxygen-dependent choline dehydrogenase (549 aa).

4–33 provides a ligand contact to FAD; sequence DFVIIGSGSAGSAMAYRLSENGRYSVIVIE. His465 serves as the catalytic Proton acceptor.

The protein belongs to the GMC oxidoreductase family. FAD serves as cofactor.

The catalysed reaction is choline + A = betaine aldehyde + AH2. It carries out the reaction betaine aldehyde + NAD(+) + H2O = glycine betaine + NADH + 2 H(+). The protein operates within amine and polyamine biosynthesis; betaine biosynthesis via choline pathway; betaine aldehyde from choline (cytochrome c reductase route): step 1/1. Its function is as follows. Involved in the biosynthesis of the osmoprotectant glycine betaine. Catalyzes the oxidation of choline to betaine aldehyde and betaine aldehyde to glycine betaine at the same rate. This chain is Oxygen-dependent choline dehydrogenase, found in Brucella suis biovar 1 (strain 1330).